The primary structure comprises 415 residues: Serine hydroxymethyltransferase 2 (415 aa).

(6S)-5,6,7,8-tetrahydrofolate contacts are provided by residues Leu122 and 126-128 (GHL). Lys230 bears the N6-(pyridoxal phosphate)lysine mark.

Belongs to the SHMT family. In terms of assembly, homodimer. It depends on pyridoxal 5'-phosphate as a cofactor.

The protein localises to the cytoplasm. The enzyme catalyses (6R)-5,10-methylene-5,6,7,8-tetrahydrofolate + glycine + H2O = (6S)-5,6,7,8-tetrahydrofolate + L-serine. It functions in the pathway one-carbon metabolism; tetrahydrofolate interconversion. The protein operates within amino-acid biosynthesis; glycine biosynthesis; glycine from L-serine: step 1/1. Functionally, catalyzes the reversible interconversion of serine and glycine with tetrahydrofolate (THF) serving as the one-carbon carrier. This reaction serves as the major source of one-carbon groups required for the biosynthesis of purines, thymidylate, methionine, and other important biomolecules. Also exhibits THF-independent aldolase activity toward beta-hydroxyamino acids, producing glycine and aldehydes, via a retro-aldol mechanism. This is Serine hydroxymethyltransferase 2 from Burkholderia lata (strain ATCC 17760 / DSM 23089 / LMG 22485 / NCIMB 9086 / R18194 / 383).